The primary structure comprises 105 residues: U21-theraphotoxin-Cg1a 4 (105 aa).

The signal sequence occupies residues methionine 1 to alanine 21. Positions glutamate 22 to glutamate 48 are excised as a propeptide. Disulfide bonds link cysteine 49/cysteine 63, cysteine 56/cysteine 68, and cysteine 62/cysteine 76. Valine 82 bears the Valine amide mark. Residues glycine 83 to valine 105 constitute a propeptide that is removed on maturation.

Belongs to the neurotoxin 10 (Hwtx-1) family. 05 (F4a) subfamily. As to expression, expressed by the venom gland.

It is found in the secreted. Functionally, probable ion channel inhibitor. This is U21-theraphotoxin-Cg1a 4 from Chilobrachys guangxiensis (Chinese earth tiger tarantula).